Here is a 666-residue protein sequence, read N- to C-terminus: LEAF RUST 10 DISEASE-RESISTANCE LOCUS RECEPTOR-LIKE PROTEIN KINASE-like 2.5 (666 aa).

The N-terminal stretch at 1–30 (MINFSLSLTKSMSYSFIWMLFVIHISCVLS) is a signal peptide. The Extracellular segment spans residues 31 to 275 (ADGNHILCSP…PTRNKVILKL (245 aa)). Residues asparagine 119, asparagine 141, asparagine 171, and asparagine 198 are each glycosylated (N-linked (GlcNAc...) asparagine). The helical transmembrane segment at 276–296 (FFIVIYVLGIGAASFAMMGVI) threads the bilayer. Topologically, residues 297–666 (LVVTCLNCLI…YTEICSINVA (370 aa)) are cytoplasmic. In terms of domain architecture, Protein kinase spans 348–636 (KSFAEVIGKG…ALEVPPRPVL (289 aa)). ATP-binding positions include 354–362 (IGKGGFGTV) and lysine 376. Position 420 is a phosphotyrosine (tyrosine 420). The active-site Proton acceptor is the aspartate 471. Residues threonine 508 and threonine 511 each carry the phosphothreonine modification.

This sequence belongs to the protein kinase superfamily. Ser/Thr protein kinase family.

Its subcellular location is the membrane. The catalysed reaction is L-seryl-[protein] + ATP = O-phospho-L-seryl-[protein] + ADP + H(+). It catalyses the reaction L-threonyl-[protein] + ATP = O-phospho-L-threonyl-[protein] + ADP + H(+). This chain is LEAF RUST 10 DISEASE-RESISTANCE LOCUS RECEPTOR-LIKE PROTEIN KINASE-like 2.5, found in Arabidopsis thaliana (Mouse-ear cress).